A 212-amino-acid chain; its full sequence is NADH dehydrogenase [ubiquinone] iron-sulfur protein 8, mitochondrial (212 aa).

The N-terminal 36 residues, 1-36 (MRCLTMPMLLRALAQAQAARAGHASVRGLHSSAVAA), are a transit peptide targeting the mitochondrion. 4Fe-4S ferredoxin-type domains follow at residues 104 to 133 (RRYP…IEAE) and 143 to 172 (TRYD…EGPN). Residues Cys-113, Cys-116, Cys-119, Cys-123, Cys-152, Cys-155, Cys-158, and Cys-162 each coordinate [4Fe-4S] cluster.

This sequence belongs to the complex I 23 kDa subunit family. In terms of assembly, core subunit of respiratory chain NADH dehydrogenase (Complex I) which is composed of 45 different subunits. This is a component of the iron-sulfur (IP) fragment of the enzyme. Interacts with RAB5IF. The cofactor is [4Fe-4S] cluster.

It is found in the mitochondrion inner membrane. The catalysed reaction is a ubiquinone + NADH + 5 H(+)(in) = a ubiquinol + NAD(+) + 4 H(+)(out). Functionally, core subunit of the mitochondrial membrane respiratory chain NADH dehydrogenase (Complex I) which catalyzes electron transfer from NADH through the respiratory chain, using ubiquinone as an electron acceptor. Essential for the catalytic activity and assembly of complex I. The polypeptide is NADH dehydrogenase [ubiquinone] iron-sulfur protein 8, mitochondrial (NDUFS8) (Bos taurus (Bovine)).